We begin with the raw amino-acid sequence, 380 residues long: 1-deoxy-D-xylulose 5-phosphate reductoisomerase (380 aa).

The NADPH site is built by Thr-10, Gly-11, Ser-12, Ile-13, Gly-36, Arg-37, Asn-38, and Asn-120. Lys-121 is a 1-deoxy-D-xylulose 5-phosphate binding site. Glu-122 contributes to the NADPH binding site. Position 146 (Asp-146) interacts with Mn(2+). Residues Ser-147, Glu-148, Ser-172, and His-195 each coordinate 1-deoxy-D-xylulose 5-phosphate. Position 148 (Glu-148) interacts with Mn(2+). Gly-201 provides a ligand contact to NADPH. 4 residues coordinate 1-deoxy-D-xylulose 5-phosphate: Ser-208, Asn-213, Lys-214, and Glu-217. Glu-217 is a binding site for Mn(2+).

The protein belongs to the DXR family. It depends on Mg(2+) as a cofactor. The cofactor is Mn(2+).

It catalyses the reaction 2-C-methyl-D-erythritol 4-phosphate + NADP(+) = 1-deoxy-D-xylulose 5-phosphate + NADPH + H(+). The protein operates within isoprenoid biosynthesis; isopentenyl diphosphate biosynthesis via DXP pathway; isopentenyl diphosphate from 1-deoxy-D-xylulose 5-phosphate: step 1/6. Its function is as follows. Catalyzes the NADPH-dependent rearrangement and reduction of 1-deoxy-D-xylulose-5-phosphate (DXP) to 2-C-methyl-D-erythritol 4-phosphate (MEP). The sequence is that of 1-deoxy-D-xylulose 5-phosphate reductoisomerase from Listeria monocytogenes serotype 4a (strain HCC23).